Here is a 182-residue protein sequence, read N- to C-terminus: Small ribosomal subunit protein uS4c (182 aa).

The tract at residues 13 to 32 (GLTSKRPRSGSDLKNPLRSG) is disordered. One can recognise an S4 RNA-binding domain in the interval 82 to 143 (MRLDNILFRL…KQRSKALIQN (62 aa)).

It belongs to the universal ribosomal protein uS4 family. As to quaternary structure, part of the 30S ribosomal subunit. Contacts protein S5. The interaction surface between S4 and S5 is involved in control of translational fidelity.

The protein resides in the plastid. Its subcellular location is the chloroplast. One of the primary rRNA binding proteins, it binds directly to 16S rRNA where it nucleates assembly of the body of the 30S subunit. Functionally, with S5 and S12 plays an important role in translational accuracy. The protein is Small ribosomal subunit protein uS4c (rps4) of Scadoxus puniceus (Paintbrush lily).